A 201-amino-acid chain; its full sequence is LexA repressor 1 (201 aa).

Residues Leu27–Gln47 constitute a DNA-binding region (H-T-H motif). Active-site for autocatalytic cleavage activity residues include Ser122 and Lys159.

It belongs to the peptidase S24 family. Homodimer.

It carries out the reaction Hydrolysis of Ala-|-Gly bond in repressor LexA.. In terms of biological role, represses a number of genes involved in the response to DNA damage (SOS response), including recA and lexA. In the presence of single-stranded DNA, RecA interacts with LexA causing an autocatalytic cleavage which disrupts the DNA-binding part of LexA, leading to derepression of the SOS regulon and eventually DNA repair. This chain is LexA repressor 1, found in Xanthomonas oryzae pv. oryzae (strain KACC10331 / KXO85).